Consider the following 198-residue polypeptide: Probable thymidylate kinase (198 aa).

Residue 9–16 (GIDGSGKT) participates in ATP binding.

It belongs to the thymidylate kinase family.

The enzyme catalyses dTMP + ATP = dTDP + ADP. The protein is Probable thymidylate kinase of Methanococcus vannielii (strain ATCC 35089 / DSM 1224 / JCM 13029 / OCM 148 / SB).